Reading from the N-terminus, the 585-residue chain is NADP-reducing hydrogenase subunit HndD (585 aa).

Positions 2–85 constitute a 2Fe-2S ferredoxin-type domain; the sequence is SMLTITIDGK…NMVVKTNSLR (84 aa). [2Fe-2S] cluster-binding residues include C36, C52, C55, and C69. Residues 85–124 form the 4Fe-4S His(Cys)3-ligated-type domain; that stretch reads RVLNARRTVLELLLSDHPKDCLVCAKSGECELQTLAERFG. [4Fe-4S] cluster is bound by residues H101, C105, C108, and C114. 4Fe-4S ferredoxin-type domains are found at residues 144–174 and 185–216; these read ASII…VLSG and PAFE…EHEY.

In terms of assembly, heterotetramer composed of HndA, HndB, HndC and HndD subunits. HndD is probably the hydrogenase subunit. [4Fe-4S] cluster is required as a cofactor.

It carries out the reaction H2 + NADP(+) = NADPH + H(+). With respect to regulation, inhibited by oxygen. Its function is as follows. Catalyzes the reduction of NADP in the presence of molecular H(2) to yield NADPH. This chain is NADP-reducing hydrogenase subunit HndD (hndD), found in Solidesulfovibrio fructosivorans (Desulfovibrio fructosivorans).